We begin with the raw amino-acid sequence, 526 residues long: Biotin carboxylase 2, chloroplastic (526 aa).

A chloroplast-targeting transit peptide spans Met1 to Leu71. Residues Lys181, Ala213–Ile274, Lys223, Gly229–Gly230, Glu265–Val268, and His273 each bind ATP. An ATP-grasp domain is found at Arg185–Met382. Lys302 provides a ligand contact to hydrogencarbonate. ATP-binding residues include Glu340 and Glu353. 3 residues coordinate Mg(2+): Glu340, Glu353, and Asn355. Positions 340, 353, and 355 each coordinate Mn(2+). Positions 357, 360, and 403 each coordinate hydrogencarbonate. Arg357 is a catalytic residue. Arg403 provides a ligand contact to biotin.

In terms of assembly, acetyl-CoA carboxylase is a heterohexamer composed of biotin carboxyl carrier protein, biotin carboxylase and two subunits each of ACCase subunit alpha and ACCase plastid-coded subunit beta (accD). Mg(2+) serves as cofactor. Mn(2+) is required as a cofactor.

It localises to the plastid. The protein resides in the chloroplast. It carries out the reaction N(6)-biotinyl-L-lysyl-[protein] + hydrogencarbonate + ATP = N(6)-carboxybiotinyl-L-lysyl-[protein] + ADP + phosphate + H(+). Its pathway is lipid metabolism; malonyl-CoA biosynthesis; malonyl-CoA from acetyl-CoA: step 1/1. Its function is as follows. This protein is a component of the acetyl coenzyme A carboxylase complex; first, biotin carboxylase catalyzes the carboxylation of the carrier protein and then the transcarboxylase transfers the carboxyl group to form malonyl-CoA. The protein is Biotin carboxylase 2, chloroplastic of Populus trichocarpa (Western balsam poplar).